A 496-amino-acid chain; its full sequence is MSSVKYDAIIIGAGVIGPTIATAFARQGRKVLIVERDWSKPDRIVGELMQPAGIKALRELGMIKAINNIRAVDCTGYYIKYYDETITIPYPLKKDACITNPVKPVPDAVDGVNDKLDSDSTLNVDDWDFDERVRGAAFHHGDFLMNLRQICRDEPNVTAVEATVTKILRDPSDPNTVIGVQTKQPSGTVDYHAKLTISCDGIYSKFRKELSPTNVPTIGSYFIGLYLKNAELPAKGKGHVLLGGHAPALIYSVSPTETRVLCVYVSSKPPSAANDAVYKYLRDNILPAIPKETVPAFKEALEERKFRIMPNQYLSAMKQGSENHKGFILLGDSLNMRHPLTGGGMTVGLNDSVLLAKLLHPKFVEDFDDHQLIAKRLKTFHRKRKNLDAVINTLSISLYSLFAADKKPLRILRNGCFKYFQRGGECVNGPIGLLSGMLPFPMLLFNHFFSVAFYSVYLNFIERGLLGFPLALFEAFEVLFTAIVIFTPYLWNEIVR.

Residues 4-24 (VKYDAIIIGAGVIGPTIATAF) form a helical membrane-spanning segment. FAD-binding positions include 15 to 16 (VI), 35 to 36 (ER), Arg43, Arg148, Val164, Asp332, and Met345. A run of 2 helical transmembrane segments spans residues 431-451 (IGLLSGMLPFPMLLFNHFFSV) and 466-486 (LGFPLALFEAFEVLFTAIVIF).

It belongs to the squalene monooxygenase family. Requires FAD as cofactor.

It localises to the microsome membrane. It is found in the endoplasmic reticulum membrane. It carries out the reaction squalene + reduced [NADPH--hemoprotein reductase] + O2 = (S)-2,3-epoxysqualene + oxidized [NADPH--hemoprotein reductase] + H2O + H(+). Its pathway is terpene metabolism; lanosterol biosynthesis; lanosterol from farnesyl diphosphate: step 2/3. With respect to regulation, activity is completely abolished by Triton X-100, deoxycholate or Cu(2+), and partially inhibited by thiol reagents, rotenone and antimycin A. The allylamine antimycotic agents naftifine and SF 86-327are potent inhibitors and show apparently non-competitive kinetics with respect to the substrate squalene. In terms of biological role, squalene epoxidase; part of the third module of ergosterol biosynthesis pathway that includes the late steps of the pathway. Erg1 catalyzes the epoxidation of squalene into 2,3-epoxysqualene. The third module or late pathway involves the ergosterol synthesis itself through consecutive reactions that mainly occur in the endoplasmic reticulum (ER) membrane. Firstly, the squalene synthase ERG9 catalyzes the condensation of 2 farnesyl pyrophosphate moieties to form squalene, which is the precursor of all steroids. Squalene synthase is crucial for balancing the incorporation of farnesyl diphosphate (FPP) into sterol and nonsterol isoprene synthesis. Secondly, the squalene epoxidase ERG1 catalyzes the stereospecific oxidation of squalene to (S)-2,3-epoxysqualene, which is considered to be a rate-limiting enzyme in steroid biosynthesis. Then, the lanosterol synthase ERG7 catalyzes the cyclization of (S)-2,3 oxidosqualene to lanosterol, a reaction that forms the sterol core. In the next steps, lanosterol is transformed to zymosterol through a complex process involving various demethylation, reduction and desaturation reactions. The lanosterol 14-alpha-demethylase ERG11 (also known as CYP51) catalyzes C14-demethylation of lanosterol to produce 4,4'-dimethyl cholesta-8,14,24-triene-3-beta-ol, which is critical for ergosterol biosynthesis. The C-14 reductase ERG24 reduces the C14=C15 double bond of 4,4-dimethyl-cholesta-8,14,24-trienol to produce 4,4-dimethyl-cholesta-8,24-dienol. 4,4-dimethyl-cholesta-8,24-dienol is substrate of the C-4 demethylation complex ERG25-ERG26-ERG27 in which ERG25 catalyzes the three-step monooxygenation required for the demethylation of 4,4-dimethyl and 4alpha-methylsterols, ERG26 catalyzes the oxidative decarboxylation that results in a reduction of the 3-beta-hydroxy group at the C-3 carbon to an oxo group, and ERG27 is responsible for the reduction of the keto group on the C-3. ERG28 has a role as a scaffold to help anchor ERG25, ERG26 and ERG27 to the endoplasmic reticulum and ERG29 regulates the activity of the iron-containing C4-methylsterol oxidase ERG25. Then, the sterol 24-C-methyltransferase ERG6 catalyzes the methyl transfer from S-adenosyl-methionine to the C-24 of zymosterol to form fecosterol. The C-8 sterol isomerase ERG2 catalyzes the reaction which results in unsaturation at C-7 in the B ring of sterols and thus converts fecosterol to episterol. The sterol-C5-desaturase ERG3 then catalyzes the introduction of a C-5 double bond in the B ring to produce 5-dehydroepisterol. The C-22 sterol desaturase ERG5 further converts 5-dehydroepisterol into ergosta-5,7,22,24(28)-tetraen-3beta-ol by forming the C-22(23) double bond in the sterol side chain. Finally, ergosta-5,7,22,24(28)-tetraen-3beta-ol is substrate of the C-24(28) sterol reductase ERG4 to produce ergosterol. In Candida albicans (strain SC5314 / ATCC MYA-2876) (Yeast), this protein is Squalene epoxidase ERG1.